The sequence spans 772 residues: Magnetosome formation protease MamE (772 aa).

The Cytoplasmic segment spans residues 1 to 21 (MTMFNGDVEDGGRSNVSCGKD). The chain crosses the membrane as a helical span at residues 22-42 (LKRYLMLMGVVALVVLFGAFI). Topologically, residues 43-772 (YRQSSGGLRL…RNGQEFWIVL (730 aa)) are lumenal. Residues His-187, Asp-220, and Ser-296 each act as charge relay system in the active site. Positions 374–397 (IAAGTPSPHVDGRQNMDCSNCHDI) match the MCR (magnetochrome) 1 motif. Residues Cys-391, Cys-394, His-395, Cys-437, Cys-440, His-441, Cys-488, Cys-491, and His-492 each contribute to the heme site. 2 short sequence motifs (MCR) span residues 420-443 (IPANAVSPHTDGRQNMTCNTCHQF) and 470-494 (AIRANAANPHTDGRQNMNCASCHQI). The Cytochrome c domain maps to 445-558 (GGAAAGPIAF…ALTPLTQRLG (114 aa)). 2 PDZ domains span residues 522–626 (AINI…LRAG) and 696–765 (GATP…HRNG).

This sequence in the N-terminal section; belongs to the peptidase S1C family. In terms of assembly, might interact with MamB via PDZ1. Heme is required as a cofactor. Post-translationally, the protein isolated from magnetosome membranes has a molecular weight of about 36.3 kDa, probably due to C-terminal cleavage. Subject to autocatalytic cleavage; cleavage also requires MamO; these may be the same event.

It localises to the magnetosome membrane. Functionally, acts at 2 distinct steps of magnetosome formation; required for correct localization of proteins to the magnetosome while the protease activity is required for maturation of small magnetite crystals into larger, functional ones. Probably cleaves at least itself, MamO and MamP; cleavage requires the putative transprot domain of MamO. Involved in localization of some proteins (at least MamA, MamC, MamF, MamI and MamJ) to the magnetosome. One of 7 genes (mamLQBIEMO) able to induce magnetosome membrane biogenesis; coexpression of mamLQRBIEMO in a deletion of the 17 gene mamAB operon restores magnetosome vesicle formation but not magnetite biosynthesis. The protein is Magnetosome formation protease MamE of Magnetospirillum gryphiswaldense (strain DSM 6361 / JCM 21280 / NBRC 15271 / MSR-1).